The following is a 1247-amino-acid chain: MADTTTVVVERREVAEGRESSKANHIGEERRGYDVSRKRCSISVHGGGTEGGGGNMRTNYRELSPASLRIHRKSSHDIRNTLLGPDGEVLHLHDPSGKGGDGMGKMPAVVKPIKLKSIVTKAESYDTMHGKASDVMSCSREVCMGSVMTPHVIGTETRKPEIVQQHAKDFLDQYYSSIRRLKSPAHDSRWQQVQKEVEATGSYHLTETELIYGAKLAWRNSSRCIGRIQWSKLQVFDCRYVTTTSGMFEAICNHIKYATNKGNLRSAITIFPQRTDGKHDYRIWNNQIISYAGYKNADGKIIGDPANVEFTDFCVKLGWKSKRTEWDILPLVVSANGHDPDYFDYPPELILEVPLSHPQFKWFAELNLRWYAVPMVSSMLFDCGGIQFTATAFSGWYMSTEIGCRNLCDANRRNLLEPIAIKMGLDTRNPTSLWKDKALVEINIAVLHSYQSRNITIVDHHTASESFMKHFENETKLRNGCPADWIWIVPPMSASVTPVFHQEMAVYYLRPSFEYQESAMKTHIWKKGRDSAKNKKPRRKFNFKQIARAVKFTSKLFGRALSRRIKATVLYATETGRSEQYARQLVELLGHAFNAQIYCMSDYDISSIEHEALLLVVASTFGNGDPPENGELFAQDLYAMKLHESGHHQAHSELTIAASSKSFIKANSRSDLGKFGPMGGRKIDRLDSLRGSTTDTLSEETFGPLSNVRFAVFALGSSAYPNFCAFGKYIDNILGELGGERLMKMATGDEICGQEQAFRKWAPEVFKIACETFCLDPEETLSDAAFALQSELSENTVRYAPVAEYESLDRALSKFHNKKSMECSVKRNPINLHCEMNGTERSTILVEIMAEGIDYEPGDHVGIFPANRKEIVDGIIERLTGVNDPDEMLQLQVLKEKQTQNGVYKSWEPHERLPVCTLRTLLTRFLDITTPPTRQLLTYLASCCGDKADEERLLMLANESSVYEDWRYWKLPHLLEVLEEFPSCRPPAAVFVAQLNALQPRFYSISSSPRKYSNEIHLTVAIVTYRAEDGEGAEHYGVCSNYLANLQSDDKIYLFVRSAPSFHMSKDRTKPVILIGPGTGIAPFRSFWQEWDHIKTEMVDCKIPKVWLFFGCRTKNVDLYRDEKEEMVQHGVLDRVFLALSREENIPKTYVQDLALKEAESISELIMQEKGHIYVCGDVTMAEHVYQTLRKILATREKRTETEMEKYMLTLRDENRYHEDIFGITLRTAEIHNKSRATARIRMASQP.

Residues 13-33 are disordered; the sequence is EVAEGRESSKANHIGEERRGY. Residue S146 coordinates (6R)-L-erythro-5,6,7,8-tetrahydrobiopterin. C224 is a binding site for heme b. Positions 287, 396, 397, 401, and 406 each coordinate L-arginine. 2 residues coordinate (6R)-L-erythro-5,6,7,8-tetrahydrobiopterin: W487 and F500. Y515 is a binding site for heme b. The tract at residues 537 to 557 is calmodulin-binding; that stretch reads PRRKFNFKQIARAVKFTSKLF. The Flavodoxin-like domain occupies 567–766; that stretch reads ATVLYATETG…AFRKWAPEVF (200 aa). 712–743 is a binding site for FMN; sequence VFALGSSAYPNFCAFGKYIDNILGELGGERLM. Residues 795–1065 enclose the FAD-binding FR-type domain; the sequence is NTVRYAPVAE…VRSAPSFHMS (271 aa). FAD is bound by residues 855–866 and 998–1008; these read YEPGDHVGIFPA and LQPRFYSISSS. NADP(+) contacts are provided by residues 1073 to 1091 and 1170 to 1185; these read ILIG…WQEW and KGHI…AEHV.

This sequence belongs to the NOS family. Heme b serves as cofactor. The cofactor is FAD. FMN is required as a cofactor.

It carries out the reaction 2 L-arginine + 3 NADPH + 4 O2 + H(+) = 2 L-citrulline + 2 nitric oxide + 3 NADP(+) + 4 H2O. Stimulated by calcium/calmodulin. Functionally, produces nitric oxide (NO) which is a messenger molecule with diverse functions throughout the body. Nitric oxide limits plasmodium development in the midgut. This is Nitric oxide synthase from Anopheles stephensi (Indo-Pakistan malaria mosquito).